The primary structure comprises 260 residues: Indole-3-glycerol phosphate synthase (260 aa).

The protein belongs to the TrpC family.

The catalysed reaction is 1-(2-carboxyphenylamino)-1-deoxy-D-ribulose 5-phosphate + H(+) = (1S,2R)-1-C-(indol-3-yl)glycerol 3-phosphate + CO2 + H2O. Its pathway is amino-acid biosynthesis; L-tryptophan biosynthesis; L-tryptophan from chorismate: step 4/5. The chain is Indole-3-glycerol phosphate synthase from Staphylococcus aureus (strain COL).